The chain runs to 186 residues: Peptidyl-tRNA hydrolase (186 aa).

Position 14 (Tyr14) interacts with tRNA. Catalysis depends on His19, which acts as the Proton acceptor. Residues Phe64, Asn66, and Asn112 each contribute to the tRNA site.

This sequence belongs to the PTH family. Monomer.

It localises to the cytoplasm. It carries out the reaction an N-acyl-L-alpha-aminoacyl-tRNA + H2O = an N-acyl-L-amino acid + a tRNA + H(+). Its function is as follows. Hydrolyzes ribosome-free peptidyl-tRNAs (with 1 or more amino acids incorporated), which drop off the ribosome during protein synthesis, or as a result of ribosome stalling. In terms of biological role, catalyzes the release of premature peptidyl moieties from peptidyl-tRNA molecules trapped in stalled 50S ribosomal subunits, and thus maintains levels of free tRNAs and 50S ribosomes. In Mycoplasma mycoides subsp. mycoides SC (strain CCUG 32753 / NCTC 10114 / PG1), this protein is Peptidyl-tRNA hydrolase.